Consider the following 306-residue polypeptide: Acetaldehyde dehydrogenase (306 aa).

An NAD(+)-binding site is contributed by 12 to 15 (SGNI). Catalysis depends on cysteine 127, which acts as the Acyl-thioester intermediate. NAD(+)-binding positions include 158–166 (SAGPGTRAN) and asparagine 277.

It belongs to the acetaldehyde dehydrogenase family.

The enzyme catalyses acetaldehyde + NAD(+) + CoA = acetyl-CoA + NADH + H(+). The sequence is that of Acetaldehyde dehydrogenase from Mycolicibacterium gilvum (strain PYR-GCK) (Mycobacterium gilvum (strain PYR-GCK)).